Reading from the N-terminus, the 330-residue chain is MATH domain and coiled-coil domain-containing protein At3g58210 (330 aa).

The MATH domain maps to 6 to 133; sequence DNKFTWVIQN…NDELKIVAEV (128 aa). Positions 263-314 form a coiled coil; it reads FKVDWLEKKLEEVKKKKEEEQTGEARIQELEEELKEFKQKCLDREAMLEKEK.

This chain is MATH domain and coiled-coil domain-containing protein At3g58210, found in Arabidopsis thaliana (Mouse-ear cress).